The primary structure comprises 494 residues: Ketol-acid reductoisomerase (NADP(+)) (494 aa).

The KARI N-terminal Rossmann domain occupies 14–208 (LDQIGRCRFM…GGDRAGVLES (195 aa)). Residues 45–48 (CGAQ), Arg-68, Arg-76, Ser-78, and 108–110 (DKQ) each bind NADP(+). His-132 is a catalytic residue. NADP(+) is bound at residue Gly-158. KARI C-terminal knotted domains lie at 209 to 344 (SFVA…NAPE) and 345 to 487 (YNGK…MTDM). Mg(2+) is bound by residues Asp-217, Glu-221, Glu-389, and Glu-393. Ser-414 serves as a coordination point for substrate.

It belongs to the ketol-acid reductoisomerase family. Mg(2+) is required as a cofactor.

The enzyme catalyses (2R)-2,3-dihydroxy-3-methylbutanoate + NADP(+) = (2S)-2-acetolactate + NADPH + H(+). It catalyses the reaction (2R,3R)-2,3-dihydroxy-3-methylpentanoate + NADP(+) = (S)-2-ethyl-2-hydroxy-3-oxobutanoate + NADPH + H(+). It functions in the pathway amino-acid biosynthesis; L-isoleucine biosynthesis; L-isoleucine from 2-oxobutanoate: step 2/4. The protein operates within amino-acid biosynthesis; L-valine biosynthesis; L-valine from pyruvate: step 2/4. Involved in the biosynthesis of branched-chain amino acids (BCAA). Catalyzes an alkyl-migration followed by a ketol-acid reduction of (S)-2-acetolactate (S2AL) to yield (R)-2,3-dihydroxy-isovalerate. In the isomerase reaction, S2AL is rearranged via a Mg-dependent methyl migration to produce 3-hydroxy-3-methyl-2-ketobutyrate (HMKB). In the reductase reaction, this 2-ketoacid undergoes a metal-dependent reduction by NADPH to yield (R)-2,3-dihydroxy-isovalerate. This chain is Ketol-acid reductoisomerase (NADP(+)), found in Pseudoalteromonas atlantica (strain T6c / ATCC BAA-1087).